Reading from the N-terminus, the 867-residue chain is Coiled-coil domain-containing protein 178 (867 aa).

Coiled coils occupy residues 153–204, 233–414, 445–470, and 662–696; these read DEKC…KIDS, WHLE…ENQY, ACTK…TNES, and MIFY…KNKF.

The polypeptide is Coiled-coil domain-containing protein 178 (CCDC178) (Homo sapiens (Human)).